Here is a 710-residue protein sequence, read N- to C-terminus: ARM REPEAT PROTEIN INTERACTING WITH ABF2 (710 aa).

The disordered stretch occupies residues 1-35 (MDQQPERREGRSFPERKGQKRKLEEGAAAVEDREI). ARM repeat units follow at residues 85–127 (EDLV…EKGS), 138–185 (PEYQ…NLAH), 188–227 (SSIK…TLAF), 230–269 (DDNK…NLVH), 272–311 (PHIK…QFAS), 314–353 (SDCK…RLAQ), 355–394 (AHNQ…GLAD), 429–468 (LKRL…HLCS), and 470–509 (EDQR…KLAN). Positions 541–608 (SDVTFLVEGR…IYTGSVDITN (68 aa)) constitute a BTB domain.

As to quaternary structure, interacts with ABF2. Interacts with DUF7/AIP1. As to expression, detected in embryos and most of the vegetative and reproductive organs.

The protein resides in the nucleus. It functions in the pathway protein modification; protein ubiquitination. May act as a substrate-specific adapter of an E3 ubiquitin-protein ligase complex (CUL3-RBX1-BTB) which mediates the ubiquitination and subsequent proteasomal degradation of target proteins. Acts as a positive regulator of ABA response via the modulation of the transcriptional activity of ABF2, a transcription factor which controls ABA-dependent gene expression via the G-box-type ABA-responsive elements. Negative regulator of seed germination and young seedling growth. This is ARM REPEAT PROTEIN INTERACTING WITH ABF2 (ARIA) from Arabidopsis thaliana (Mouse-ear cress).